The following is a 139-amino-acid chain: Protein archease (139 aa).

Residues Asp-12, Asp-138, and Ile-139 each coordinate Ca(2+).

This sequence belongs to the archease family.

Activates the tRNA-splicing ligase complex by facilitating the enzymatic turnover of catalytic subunit RtcB. Acts by promoting the guanylylation of RtcB, a key intermediate step in tRNA ligation. Can also alter the NTP specificity of RtcB such that ATP, dGTP or ITP is used efficiently. The sequence is that of Protein archease from Saccharolobus islandicus (strain Y.N.15.51 / Yellowstone #2) (Sulfolobus islandicus).